Here is a 480-residue protein sequence, read N- to C-terminus: O-acyltransferase ausP (480 aa).

Residues His180 and Asp412 each act as proton acceptor in the active site.

The protein belongs to the plant acyltransferase family. In terms of assembly, monomer.

Its pathway is secondary metabolite biosynthesis; terpenoid biosynthesis. O-acyltransferase; part of the gene cluster that mediates the biosynthesis of calidodehydroaustin, a fungal meroterpenoid. The first step of the pathway is the synthesis of 3,5-dimethylorsellinic acid by the polyketide synthase ausA. 3,5-dimethylorsellinic acid is then prenylated by the polyprenyl transferase ausN. Further epoxidation by the FAD-dependent monooxygenase ausM and cyclization by the probable terpene cyclase ausL lead to the formation of protoaustinoid A. Protoaustinoid A is then oxidized to spiro-lactone preaustinoid A3 by the combined action of the FAD-binding monooxygenases ausB and ausC, and the dioxygenase ausE. Acid-catalyzed keto-rearrangement and ring contraction of the tetraketide portion of preaustinoid A3 by ausJ lead to the formation of preaustinoid A4. The aldo-keto reductase ausK, with the help of ausH, is involved in the next step by transforming preaustinoid A4 into isoaustinone which is in turn hydroxylated by the P450 monooxygenase ausI to form austinolide. The cytochrome P450 monooxygenase ausG modifies austinolide to austinol. Austinol is further acetylated to austin by the O-acetyltransferase ausP, which spontaneously changes to dehydroaustin. The cytochrome P450 monooxygenase ausR then converts dehydroaustin is into 7-dehydrodehydroaustin. The hydroxylation catalyzed by ausR permits the O-acetyltransferase ausQ to add an additional acetyl group to the molecule, leading to the formation of acetoxydehydroaustin. The short chain dehydrogenase ausT catalyzes the reduction of the double bond present between carbon atoms 1 and 2 to convert 7-dehydrodehydroaustin into 1,2-dihydro-7-hydroxydehydroaustin. AusQ catalyzes not only an acetylation reaction but also the addition of the PKS ausV diketide product to 1,2-dihydro-7-hydroxydehydroaustin, forming precalidodehydroaustin. Finally, the iron/alpha-ketoglutarate-dependent dioxygenase converts precalidodehydroaustin into calidodehydroaustin. The polypeptide is O-acyltransferase ausP (Aspergillus calidoustus).